A 274-amino-acid polypeptide reads, in one-letter code: Putative pyruvate, phosphate dikinase regulatory protein 1 (274 aa).

Residue 149 to 156 (GISRTSKT) coordinates ADP.

This sequence belongs to the pyruvate, phosphate/water dikinase regulatory protein family. PDRP subfamily.

It catalyses the reaction N(tele)-phospho-L-histidyl/L-threonyl-[pyruvate, phosphate dikinase] + ADP = N(tele)-phospho-L-histidyl/O-phospho-L-threonyl-[pyruvate, phosphate dikinase] + AMP + H(+). The enzyme catalyses N(tele)-phospho-L-histidyl/O-phospho-L-threonyl-[pyruvate, phosphate dikinase] + phosphate + H(+) = N(tele)-phospho-L-histidyl/L-threonyl-[pyruvate, phosphate dikinase] + diphosphate. Bifunctional serine/threonine kinase and phosphorylase involved in the regulation of the pyruvate, phosphate dikinase (PPDK) by catalyzing its phosphorylation/dephosphorylation. This Listeria welshimeri serovar 6b (strain ATCC 35897 / DSM 20650 / CCUG 15529 / CIP 8149 / NCTC 11857 / SLCC 5334 / V8) protein is Putative pyruvate, phosphate dikinase regulatory protein 1.